The chain runs to 937 residues: Inactive tyrosine-protein kinase transmembrane receptor ROR1 (937 aa).

Residues 1–29 form the signal peptide; sequence MHRPRRRGTRPPLLALLAALLLAARGAAA. Over 30-406 the chain is Extracellular; that stretch reads QETELSVSAE…KEKNKMEILY (377 aa). Residues 42-147 form the Ig-like C2-type domain; the sequence is PTSSWNISSE…EVVSSTGVLF (106 aa). N-linked (GlcNAc...) asparagine glycosylation is found at Asn47 and Asn66. Cystine bridges form between Cys79-Cys131, Cys170-Cys235, Cys178-Cys228, Cys219-Cys260, Cys248-Cys296, Cys252-Cys282, Cys313-Cys391, Cys334-Cys374, and Cys362-Cys386. Residues 165-299 enclose the FZ domain; sequence EEDGFCQPYR…SPEAANCIRI (135 aa). An N-linked (GlcNAc...) asparagine glycan is attached at Asn184. A Kringle domain is found at 312-391; sequence KCYNSTGVDY…KSDLCDIPAC (80 aa). Asn315 carries N-linked (GlcNAc...) asparagine glycosylation. The chain crosses the membrane as a helical span at residues 407-427; sequence ILVPSVAIPLAIALLFFFICV. Residues 428–937 lie on the Cytoplasmic side of the membrane; that stretch reads CRNNQKSSSA…HTESMISAEL (510 aa). Residues 473–746 form the Protein kinase domain; the sequence is VRFMEELGEC…PRFKDIHVRL (274 aa). ATP contacts are provided by residues 479–487 and Lys506; that span reads LGECAFGKI. Tyr645 carries the phosphotyrosine; by autocatalysis modification. Over residues 753–762 the composition is skewed to low complexity; it reads SSHTSSTTPS. Disordered regions lie at residues 753–779 and 833–890; these read SSHT…SPVS and AAHY…HMSI. Residues 763-779 show a composition bias toward polar residues; sequence GGNATTQTTSLSASPVS. Low complexity predominate over residues 854-864; the sequence is RSPSSASGSTS. Residues 865–880 show a composition bias toward polar residues; that stretch reads TGHVTSLPSSGSNQEA.

This sequence belongs to the protein kinase superfamily. Tyr protein kinase family. ROR subfamily. In terms of assembly, interacts with ERBB2 and IGFBP5. Expressed strongly in human heart, lung and kidney, but weakly in the CNS. Isoform Short is strongly expressed in fetal and adult CNS and in a variety of human cancers, including those originating from CNS or PNS neuroectoderm.

It is found in the membrane. Its subcellular location is the cell projection. The protein resides in the axon. Has very low kinase activity in vitro and is unlikely to function as a tyrosine kinase in vivo. Receptor for ligand WNT5A which activate downstream NFkB signaling pathway and may result in the inhibition of WNT3A-mediated signaling. In inner ear, crucial for spiral ganglion neurons to innervate auditory hair cells. Via IGFBP5 ligand, forms a complex with ERBB2 to enhance CREB oncogenic signaling. This Homo sapiens (Human) protein is Inactive tyrosine-protein kinase transmembrane receptor ROR1 (ROR1).